The primary structure comprises 493 residues: Trigger factor (493 aa).

The PPIase FKBP-type domain occupies 162 to 243; that stretch reads GDFVSLDLSA…VRGVKEKELP (82 aa). Positions 432-493 are disordered; it reads ELALPARPAP…AAVDSGDRDI (62 aa). Residues 449-470 show a composition bias toward basic and acidic residues; sequence HAGHDHEGHDHADHAGHDHAGD. Low complexity predominate over residues 474-485; sequence AEPAEAPAATAA.

The protein belongs to the FKBP-type PPIase family. Tig subfamily.

Its subcellular location is the cytoplasm. It carries out the reaction [protein]-peptidylproline (omega=180) = [protein]-peptidylproline (omega=0). Its function is as follows. Involved in protein export. Acts as a chaperone by maintaining the newly synthesized protein in an open conformation. Functions as a peptidyl-prolyl cis-trans isomerase. In Frankia alni (strain DSM 45986 / CECT 9034 / ACN14a), this protein is Trigger factor.